Here is a 122-residue protein sequence, read N- to C-terminus: Piercer of microtubule wall 2 protein (122 aa).

The span at 1–23 (MARETDCDLDKKTSLTSDAEMRP) shows a compositional bias: basic and acidic residues. Disordered regions lie at residues 1-26 (MARE…PEPP) and 99-122 (QNNS…QHTL). Polar residues predominate over residues 113-122 (IDSPNYQHTL).

The protein belongs to the PIERCE2 family. As to quaternary structure, microtubule inner protein component of sperm flagellar doublet microtubules. Interacts with CFAP53, ODAD1 and ODAD3; the interactions link the outer dynein arms docking complex (ODA-DC) to the internal microtubule inner proteins (MIP) in cilium axoneme.

The protein resides in the cytoplasm. Its subcellular location is the cytoskeleton. It is found in the cilium axoneme. The protein localises to the flagellum axoneme. In terms of biological role, microtubule inner protein involved in the attachment of outer dynein arms (ODAs) to dynein-decorated doublet microtubules (DMTs) in cilia axoneme, which is required for motile cilia beating. In Mus musculus (Mouse), this protein is Piercer of microtubule wall 2 protein.